Reading from the N-terminus, the 160-residue chain is MSEKTYPMTLAEKEQLEQELEELKLVRRPEVIERIKIARSYGDLSENSEYEAAKDEQAFVEGQISSIETKIRYAEIVDSDAVAKNEVAIGKTVIVREVGTNDEDTYSIVGAAGADVFAGKISNESPIAQALIGKKTGDKVMIESPAGSYQVEIVKVKKTK.

Residues Ser-2–Glu-30 are a coiled coil.

It belongs to the GreA/GreB family.

Its function is as follows. Necessary for efficient RNA polymerase transcription elongation past template-encoded arresting sites. The arresting sites in DNA have the property of trapping a certain fraction of elongating RNA polymerases that pass through, resulting in locked ternary complexes. Cleavage of the nascent transcript by cleavage factors such as GreA or GreB allows the resumption of elongation from the new 3'terminus. GreA releases sequences of 2 to 3 nucleotides. In Streptococcus mutans serotype c (strain ATCC 700610 / UA159), this protein is Transcription elongation factor GreA.